The following is a 178-amino-acid chain: Gamma-crystallin S (178 aa).

At Ser2 the chain carries N-acetylserine. Positions 2-5 (SKTG) are N-terminal arm. Beta/gamma crystallin 'Greek key' domains are found at residues 6–44 (AKISFYEDRNFQGRRYDCDCDCVDFRSYLSRCNSIRVEG) and 45–87 (GTWA…RAVH). Positions 88–93 (LSSGGQ) are connecting peptide. Beta/gamma crystallin 'Greek key' domains follow at residues 94–134 (YKIQ…KVLE) and 135–177 (GTWI…RRIV).

Belongs to the beta/gamma-crystallin family. In terms of assembly, monomer.

Its function is as follows. Crystallins are the dominant structural components of the vertebrate eye lens. This Rattus norvegicus (Rat) protein is Gamma-crystallin S (Crygs).